The chain runs to 452 residues: Sesamin methylene transferase (452 aa).

The protein belongs to the GcvT family. Homotrimer.

It carries out the reaction (+)-sesamin + (6S)-5,6,7,8-tetrahydrofolyl-(gamma-L-Glu)(n) = (+)-sesamin monocatechol + (6R)-5,10-methylenetetrahydrofolyl-(gamma-L-Glu)(n). The catalysed reaction is (+)-sesamin monocatechol + (6S)-5,6,7,8-tetrahydrofolyl-(gamma-L-Glu)(n) = (+)-sesamin dicatechol + (6R)-5,10-methylenetetrahydrofolyl-(gamma-L-Glu)(n). Functionally, converts sesamin into sesamin mono- and di-catechol. Catalyzes a ring cleavage to transfer the methylene group to tetrahydrofolate (THF). Also active with (+)-episesamin, (-)-asarinin, sesaminol, (+)-sesamolin and piperine. This chain is Sesamin methylene transferase, found in Sinomonas sp. (strain No.22).